A 624-amino-acid polypeptide reads, in one-letter code: Sulfite reductase [ferredoxin] (624 aa).

Residues 52–137 (YQQDNRDNRV…ENLGSTISAC (86 aa)) constitute a cross-link (3'-(S-cysteinyl)-tyrosine (Tyr-Cys)). [4Fe-4S] cluster-binding residues include Cys-446, Cys-452, Cys-491, and Cys-495. Siroheme is bound at residue Cys-495.

This sequence belongs to the nitrite and sulfite reductase 4Fe-4S domain family. In terms of assembly, monomer. It depends on siroheme as a cofactor. [4Fe-4S] cluster serves as cofactor.

The enzyme catalyses hydrogen sulfide + 6 oxidized [2Fe-2S]-[ferredoxin] + 3 H2O = sulfite + 6 reduced [2Fe-2S]-[ferredoxin] + 7 H(+). Catalyzes the reduction of sulfite to sulfide, a step in the biosynthesis of sulfur-containing amino acids and cofactors. In Synechococcus elongatus (strain ATCC 33912 / PCC 7942 / FACHB-805) (Anacystis nidulans R2), this protein is Sulfite reductase [ferredoxin] (sir).